The chain runs to 1281 residues: Zinc finger transcription factor Trps1 (1281 aa).

The tract at residues 1 to 198 (MVRKKNPPLR…VPSDGGVRLN (198 aa)) is disordered. Lys-29 participates in a covalent cross-link: Glycyl lysine isopeptide (Lys-Gly) (interchain with G-Cter in SUMO2). The segment covering 40-49 (DQMSENTDQS) has biased composition (polar residues). Residues 53 to 63 (ELNHKEEHSLH) are compositionally biased toward basic and acidic residues. Lys-76 participates in a covalent cross-link: Glycyl lysine isopeptide (Lys-Gly) (interchain with G-Cter in SUMO2). A phosphoserine mark is found at Ser-90 and Ser-127. Basic and acidic residues predominate over residues 148-162 (LETKEDQKMSPKATE). Over residues 163 to 189 (ETGQAQSGQANCQGLSPVSVASKNPQV) the composition is skewed to polar residues. Phosphoserine occurs at positions 178 and 216. Residues 222–247 (FKCNICGYGYYGNDPTDLIKHFRKYH) form a C2H2-type 1; atypical zinc finger. A Glycyl lysine isopeptide (Lys-Gly) (interchain with G-Cter in SUMO2) cross-link involves residue Lys-263. The C2H2-type 2; atypical zinc finger occupies 333–358 (FRCKFCNFTYMGNSSTELEQHFLQTH). The interval 365–394 (SLPSSEVAKPSEKNSNKSIPALQSSDSGDL) is disordered. The span at 380 to 391 (NKSIPALQSSDS) shows a compositional bias: polar residues. Residues Lys-418, Lys-457, Lys-474, and Lys-488 each participate in a glycyl lysine isopeptide (Lys-Gly) (interchain with G-Cter in SUMO2) cross-link. Residues 483-512 (QNDLAKSSEGETMTKTDKSSSGAKKKDFSS) form a disordered region. Residues 488–512 (KSSEGETMTKTDKSSSGAKKKDFSS) are compositionally biased toward basic and acidic residues. The C2H2-type 3; atypical zinc finger occupies 614-637 (HQCHQCSFTTPDVDVLLFHYESVH). The interval 635-819 (SVHESQASDV…SLGLLTPVSG (185 aa)) is mediates interaction with GLI3. Residue Lys-645 forms a Glycyl lysine isopeptide (Lys-Gly) (interchain with G-Cter in SUMO2) linkage. C2H2-type zinc fingers lie at residues 666–689 (HSCT…RRAH) and 692–715 (YKCR…NTVH). Lys-737 is covalently cross-linked (Glycyl lysine isopeptide (Lys-Gly) (interchain with G-Cter in SUMO2)). Residue Thr-751 is modified to Phosphothreonine. Lys-755 is covalently cross-linked (Glycyl lysine isopeptide (Lys-Gly) (interchain with G-Cter in SUMO2)). Lys-766 participates in a covalent cross-link: Glycyl lysine isopeptide (Lys-Gly) (interchain with G-Cter in SUMO1); alternate. Lys-766 participates in a covalent cross-link: Glycyl lysine isopeptide (Lys-Gly) (interchain with G-Cter in SUMO2); alternate. Glycyl lysine isopeptide (Lys-Gly) (interchain with G-Cter in SUMO2) cross-links involve residues Lys-825, Lys-850, Lys-877, and Lys-879. The segment at 856-887 (APAGGEKSGALPQQYPASGENKSKDESQSLLR) is disordered. The GATA-type zinc finger occupies 896–920 (CANCLTTKTSLWRKNANGGYVCNAC). Glycyl lysine isopeptide (Lys-Gly) (interchain with G-Cter in SUMO2) cross-links involve residues Lys-925, Lys-937, and Lys-965. Residues 961-977 (EQLNKQQRGSNEEQVNG) show a composition bias toward polar residues. The tract at residues 961 to 1000 (EQLNKQQRGSNEEQVNGSPLERRSEDHLTESHQREIPLPS) is disordered. Ser-978 bears the Phosphoserine mark. Residues 980-995 (LERRSEDHLTESHQRE) show a composition bias toward basic and acidic residues. Residues 985 to 1184 (EDHLTESHQR…PTANGASKEK (200 aa)) are mediates interaction with RNF4. Residues Lys-1003, Lys-1012, Lys-1030, and Lys-1040 each participate in a glycyl lysine isopeptide (Lys-Gly) (interchain with G-Cter in SUMO2) cross-link. The tract at residues 1039 to 1080 (IKSPQESTGDPGNSSSVSEGKGSSERGSPIEKYMRPAKHPNY) is disordered. Positions 1040–1049 (KSPQESTGDP) are enriched in polar residues. At Ser-1041 the chain carries Phosphoserine. Low complexity predominate over residues 1050 to 1059 (GNSSSVSEGK). Positions 1060-1072 (GSSERGSPIEKYM) are enriched in basic and acidic residues. At Ser-1066 the chain carries Phosphoserine. Residue Lys-1070 forms a Glycyl lysine isopeptide (Lys-Gly) (interchain with G-Cter in SUMO2) linkage. Ser-1085 is modified (phosphoserine). The tract at residues 1163–1281 (PLDLAIKHSR…QVEKNGKPKE (119 aa)) is transcriptional repressor domain. Residues 1168 to 1196 (IKHSRPGPTANGASKEKTKAPPNVKNEGP) form a disordered region. Glycyl lysine isopeptide (Lys-Gly) (interchain with G-Cter in SUMO2); alternate cross-links involve residues Lys-1192 and Lys-1201. Glycyl lysine isopeptide (Lys-Gly) (interchain with G-Cter in SUMO); alternate cross-links involve residues Lys-1192 and Lys-1201. Lys-1201 participates in a covalent cross-link: Glycyl lysine isopeptide (Lys-Gly) (interchain with G-Cter in SUMO1); alternate. C2H2-type zinc fingers lie at residues 1215-1237 (TKCV…MSCH) and 1243-1267 (FQCS…RGLH).

In terms of assembly, interacts with RNF4; regulates TRPS1 repressor activity. Interacts specifically with the activator form of GLI3 (GLI3A) but not with the repressor form (GLI3R). Sumoylated. Sumoylation in the repressor domain inhibits the transcription repression activity. Sumoylation on Lys-1201 is the major site. Appears to be sumoylated on multiple sites. As to expression, ubiquitously expressed in the adult. Found in fetal brain, lung, kidney, liver, spleen and thymus. More highly expressed in androgen-dependent than in androgen-independent prostate cancer cells.

The protein resides in the nucleus. Transcriptional repressor. Binds specifically to GATA sequences and represses expression of GATA-regulated genes at selected sites and stages in vertebrate development. Regulates chondrocyte proliferation and differentiation. Executes multiple functions in proliferating chondrocytes, expanding the region of distal chondrocytes, activating proliferation in columnar cells and supporting the differentiation of columnar into hypertrophic chondrocytes. The sequence is that of Zinc finger transcription factor Trps1 (TRPS1) from Homo sapiens (Human).